Consider the following 707-residue polypeptide: MLGSLVLRRKALAPRLLLRLLRSPTLRGHGGASGRNVTTGSLGEPQWLRVATGGRPGTSPALFSGRGAATGGRQGGRFDTKCLAAATWGRLPGPEETLPGQDSWNGVPSRAGLGMCALAAALVVHCYSKSPSNKDAALLEAARANNMQEVSRLLSEGADVNAKHRLGWTALMVAAINRNNSVVQVLLAAGADPNLGDDFSSVYKTAKEQGIHSLEDGGQDGASRHITNQWTSALEFRRWLGLPAGVLITREDDFNNRLNNRASFKGCTALHYAVLADDYRTVKELLDGGANPLQRNEMGHTPLDYAREGEVMKLLRTSEAKYQEKQRKREAEERRRFPLEQRLKEHIIGQESAIATVGAAIRRKENGWYDEEHPLVFLFLGSSGIGKTELAKQTAKYMHKDAKKGFIRLDMSEFQERHEVAKFIGSPPGYVGHEEGGQLTKKLKQCPNAVVLFDEVDKAHPDVLTIMLQLFDEGRLTDGKGKTIDCKDAIFIMTSNVASDEIAQHALQLRQEALEMSRNRIAENLGDVQISDKITISKNFKENVIRPILKAHFRRDEFLGRINEIVYFLPFCHSELIQLVNKELNFWAKRAKQRHNITLLWDREVADVLVDGYNVHYGARSIKHEVERRVVNQLAAAYEQDLLPGGCTLRITVEDSDKQLLKSPELPSPQAEKRLPKLRLEIIDKDSKTRRLDIRAPLHPEKVCNTI.

Residues 1-36 (MLGSLVLRRKALAPRLLLRLLRSPTLRGHGGASGRN) constitute a mitochondrion transit peptide. The tract at residues 92 to 126 (PGPEETLPGQDSWNGVPSRAGLGMCALAAALVVHC) is autoinhibitory. ANK repeat units lie at residues 133–162 (NKDA…DVNA), 166–195 (LGWT…DPNL), 265–295 (KGCT…PLQR), and 298–327 (MGHT…EKQR). 10 residues coordinate ATP: H346, I348, S383, G384, I385, G386, K387, T388, E455, and N496. Residues 507 to 535 (LQLRQEALEMSRNRIAENLGDVQISDKIT) form a regulatory; slows ATPase and disaggregase activities region. An ATP-binding site is contributed by R561. K589 is modified (N6-acetyllysine). R620 contributes to the ATP binding site.

Belongs to the ClpA/ClpB family. As to quaternary structure, homododecamer when substrate-bound; the homododecamer consists of 2 homohexamers stacked head-to-head via ANK repeat-mediated interactions. The active substrate-bound form is likely to exist in a dynamic equilibrium between homohexamers and homododecamers. Homotetradecamer in the unbound state which is remodeled upon substrate binding into the homododecamer. Interacts with PHB and PHB2. Interacts with MAVS; the interaction is enhanced by Sendai virus infection. In terms of processing, proteolytically cleaved by protease PARL. ATP-dependent protein disaggregase activity is stimulated by PARL-mediated cleavage of the N-terminal autoinhibitory peptide. As to expression, widely expressed (at protein level). Expressed in fetal, as well as in adult tissues, with highest levels in adult brain, including thalamus, hippocampus, occipital cortex and parietal cortex. Low expression in granulocytes.

Its subcellular location is the mitochondrion intermembrane space. It catalyses the reaction ATP + H2O = ADP + phosphate + H(+). With respect to regulation, disaggregase activity is inhibited by ADP. Functions as a regulatory ATPase and participates in secretion/protein trafficking process. Has ATP-dependent protein disaggregase activity and is required to maintain the solubility of key mitochondrial proteins. Involved in mitochondrial-mediated antiviral innate immunity, activates RIG-I-mediated signal transduction and production of IFNB1 and pro-inflammatory cytokine IL6. Plays a role in granulocyte differentiation. This is Mitochondrial disaggregase from Homo sapiens (Human).